The following is a 462-amino-acid chain: MGTIYLFRKTQRSLLGKLTQEFRLVTADRRSWKILLFGAINVVCTGFLLTWCSSTNSMALTAYTYLTIFDLFSLITSLISYWVMMKKPSPTYSFGFERLEVLAVFASTVLAQLGALFILKESAERFLEQPEIHTGRLLVGTFVALFFNLFTMLSIRNKPFAYVSEAASTSWLQEHVADLSRSLCGVIPGLSSIFLPRMNPFVLIDIAGALALCITYMLIEINNYFAVDTASAIAIAVMTFGTMYPMSVYSGKVLLQTTPPHVIGQLDKLLREVSTLDGVLEVRNEHFWTLGFGTMAGSVHVRIRRDANEQMVLAHVTNRLSTLVSTPTVQIFKDDWARPVLASGTMPPNMLNIPEHHVIQMPSLKSTVDELNPMTSTPSKPSGPPPEFAFNTPGKNMNPVILSNNQTRPFGVGYGTTPYTTTFNQGLGVPGVGNTQGLRTGLTNVANRYGTYTPGQFTQFRQ.

Residues 1 to 33 (MGTIYLFRKTQRSLLGKLTQEFRLVTADRRSWK) lie on the Cytoplasmic side of the membrane. The helical transmembrane segment at 34–54 (ILLFGAINVVCTGFLLTWCSS) threads the bilayer. At 55–64 (TNSMALTAYT) the chain is on the extracellular side. A helical transmembrane segment spans residues 65–85 (YLTIFDLFSLITSLISYWVMM). Residues 86 to 98 (KKPSPTYSFGFER) are Cytoplasmic-facing. A helical transmembrane segment spans residues 99 to 119 (LEVLAVFASTVLAQLGALFIL). The Extracellular segment spans residues 120 to 134 (KESAERFLEQPEIHT). A helical membrane pass occupies residues 135–155 (GRLLVGTFVALFFNLFTMLSI). The Cytoplasmic segment spans residues 156–200 (RNKPFAYVSEAASTSWLQEHVADLSRSLCGVIPGLSSIFLPRMNP). A helical transmembrane segment spans residues 201–221 (FVLIDIAGALALCITYMLIEI). Topologically, residues 222–223 (NN) are extracellular. A helical membrane pass occupies residues 224–244 (YFAVDTASAIAIAVMTFGTMY). Residues 245 to 462 (PMSVYSGKVL…TPGQFTQFRQ (218 aa)) are Cytoplasmic-facing.

It belongs to the cation diffusion facilitator (CDF) transporter (TC 2.A.4) family. SLC30A subfamily. In terms of assembly, heterodimer with SLC30A5; form a functional zinc ion transmembrane transporter.

It localises to the golgi apparatus. It is found in the trans-Golgi network membrane. Has probably no intrinsic transporter activity but together with SLC30A5 forms a functional zinc ion:proton antiporter heterodimer, mediating zinc entry into the lumen of organelles along the secretory pathway. As part of that zinc ion:proton antiporter, contributes to zinc ion homeostasis within the early secretory pathway and regulates the activation and folding of enzymes like alkaline phosphatases and enzymes involved in phosphatidylinositol glycan anchor biosynthesis. The polypeptide is Zinc transporter 6-B (slc30a6-b) (Xenopus laevis (African clawed frog)).